The following is a 667-amino-acid chain: Gamma-tubulin complex component 4 (667 aa).

The segment at 424–446 (DHKADATQPREVPSRETSPREAP) is disordered.

The protein belongs to the TUBGCP family. In terms of assembly, component of the gamma-tubulin ring complex (gTuRC) consisting of TUBGCP2, TUBGCP3, TUBGCP4, TUBGCP5 and TUBGCP6 and gamma-tubulin TUBG1 or TUBG2. TUBGCP2, TUBGCP3, TUBGCP4, TUBGCP5 and TUBGCP6 assemble in a 5:5:2:1:1 stoichiometry; each is associated with a gamma-tubulin, thereby arranging 14 gamma-tubulins in a helical manner. Gamma-tubulin at the first position is blocked by TUBGCP3 at the last position, allowing 13 protafilaments to grow into a microtubule. The gTuRC (via TUBGCP3 and TUBGCP6) interacts with ACTB and MZT1; the interactions form a luminal bridge that stabilizes the initial structure during complex assembly. The gTuRC (via TUBGCP2) interacts with MZT2A/MZT2B and CDK5RAP2 (via CM1 motif); the interactions play a role in gTuRC activation. Interacts with NINL. Interacts with ATF5; the ATF5:PCNT:polyglutamylated tubulin (PGT) tripartite unites the mother centriole and the pericentriolar material (PCM) in the centrosome.

Its subcellular location is the cytoplasm. It is found in the cytoskeleton. The protein resides in the microtubule organizing center. The protein localises to the centrosome. In terms of biological role, component of the gamma-tubulin ring complex (gTuRC) which mediates microtubule nucleation. The gTuRC regulates the minus-end nucleation of alpha-beta tubulin heterodimers that grow into microtubule protafilaments, a critical step in centrosome duplication and spindle formation. The chain is Gamma-tubulin complex component 4 (Tubgcp4) from Mus musculus (Mouse).